We begin with the raw amino-acid sequence, 314 residues long: Probable serine/threonine-protein kinase WNK11 (314 aa).

The interval 1–22 is disordered; that stretch reads MMTCASSDDNESEKDKDSESFV. In terms of domain architecture, Protein kinase spans 31–289; it reads GRYGELLGSG…AAELLCDPFF (259 aa). Residue 111–114 coordinates ATP; sequence TEIC. D178 (proton acceptor) is an active-site residue. The tract at residues 295 to 314 is disordered; the sequence is DDDEDGENNDNNGAGRIVVS.

This sequence belongs to the protein kinase superfamily. Ser/Thr protein kinase family. WNK subfamily.

It catalyses the reaction L-seryl-[protein] + ATP = O-phospho-L-seryl-[protein] + ADP + H(+). It carries out the reaction L-threonyl-[protein] + ATP = O-phospho-L-threonyl-[protein] + ADP + H(+). Functionally, may regulate flowering time by modulating the photoperiod pathway. The protein is Probable serine/threonine-protein kinase WNK11 (WNK11) of Arabidopsis thaliana (Mouse-ear cress).